Here is a 324-residue protein sequence, read N- to C-terminus: Glyoxylate/hydroxypyruvate reductase B (324 aa).

Residues R237 and E266 contribute to the active site. The active-site Proton donor is the H285.

This sequence belongs to the D-isomer specific 2-hydroxyacid dehydrogenase family. GhrB subfamily. In terms of assembly, homodimer.

It localises to the cytoplasm. The enzyme catalyses glycolate + NADP(+) = glyoxylate + NADPH + H(+). The catalysed reaction is (R)-glycerate + NAD(+) = 3-hydroxypyruvate + NADH + H(+). It carries out the reaction (R)-glycerate + NADP(+) = 3-hydroxypyruvate + NADPH + H(+). Its function is as follows. Catalyzes the NADPH-dependent reduction of glyoxylate and hydroxypyruvate into glycolate and glycerate, respectively. The chain is Glyoxylate/hydroxypyruvate reductase B from Salmonella typhi.